A 305-amino-acid chain; its full sequence is MSVILNNGLLKRESFVIGRFEVLEPTINILLVNLMPNRLQTEKQFTRLLSHLPINVRVTFAVPSEHKIRHDTDAIMTNYVTLNDIWHKKFDGMIVTGAPVDRMKFEQIDYWDEFRHLLEWRKTHVTESLFACWAAYGAGYAERNFPVKALSEKISGVFQASQIFKRHSLLKDLENISMPQSRYFTVPNFGVARRLKVAGDDILGAFILRDEHVNSTYITGHFEYDTETLENEYLRDIAIDPNTIKPKNYFYNNKPTNTWQTYAEKFFVNWGELLMEKMTSSRSTIPTLNQERNKLGLGTSQCKYL.

Catalysis depends on Cys132, which acts as the Acyl-thioester intermediate. Substrate contacts are provided by Lys153 and Ser181. His221 (proton acceptor) is an active-site residue. Glu223 is a catalytic residue. Arg235 is a substrate binding site.

The protein belongs to the MetA family.

Its subcellular location is the cytoplasm. It catalyses the reaction L-homoserine + acetyl-CoA = O-acetyl-L-homoserine + CoA. It participates in amino-acid biosynthesis; L-methionine biosynthesis via de novo pathway; O-acetyl-L-homoserine from L-homoserine: step 1/1. In terms of biological role, transfers an acetyl group from acetyl-CoA to L-homoserine, forming acetyl-L-homoserine. In Leuconostoc mesenteroides subsp. mesenteroides (strain ATCC 8293 / DSM 20343 / BCRC 11652 / CCM 1803 / JCM 6124 / NCDO 523 / NBRC 100496 / NCIMB 8023 / NCTC 12954 / NRRL B-1118 / 37Y), this protein is Homoserine O-acetyltransferase.